Reading from the N-terminus, the 119-residue chain is Protein phosphatase EYA4 (119 aa).

Belongs to the HAD-like hydrolase superfamily. EYA family. It depends on Mg(2+) as a cofactor.

It is found in the cytoplasm. Its subcellular location is the nucleus. The catalysed reaction is O-phospho-L-tyrosyl-[protein] + H2O = L-tyrosyl-[protein] + phosphate. In terms of biological role, tyrosine phosphatase that specifically dephosphorylates 'Tyr-142' of histone H2AX (H2AXY142ph). 'Tyr-142' phosphorylation of histone H2AX plays a central role in DNA repair and acts as a mark that distinguishes between apoptotic and repair responses to genotoxic stress. Promotes efficient DNA repair by dephosphorylating H2AX, promoting the recruitment of DNA repair complexes containing MDC1. Its function as histone phosphatase probably explains its role in transcription regulation during organogenesis. May be involved in development of the eye. The polypeptide is Protein phosphatase EYA4 (EYA4) (Gallus gallus (Chicken)).